The primary structure comprises 501 residues: Pyruvate kinase (501 aa).

Arg-50 is a binding site for substrate. K(+)-binding residues include Asn-52, Ser-54, Asp-85, and Thr-86. Residue 52 to 55 coordinates ATP; it reads NFSH. Residues Arg-92 and Lys-178 each coordinate ATP. Glu-243 contributes to the Mg(2+) binding site. Substrate is bound by residues Gly-266, Asp-267, and Thr-299. Asp-267 contacts Mg(2+).

The protein belongs to the pyruvate kinase family. In terms of assembly, homotetramer. It depends on Mg(2+) as a cofactor. Requires K(+) as cofactor.

The catalysed reaction is pyruvate + ATP = phosphoenolpyruvate + ADP + H(+). The protein operates within carbohydrate degradation; glycolysis; pyruvate from D-glyceraldehyde 3-phosphate: step 5/5. The polypeptide is Pyruvate kinase (PYK1) (Lachancea kluyveri (strain ATCC 58438 / CBS 3082 / BCRC 21498 / NBRC 1685 / JCM 7257 / NCYC 543 / NRRL Y-12651) (Yeast)).